Consider the following 652-residue polypeptide: Large subunit GTPase 1 homolog (652 aa).

Ser-93 carries the post-translational modification Phosphoserine. A CP-type G domain is found at 164-438 (WRQLWRVIER…LCDCPGLVMP (275 aa)). 212-215 (NKAD) serves as a coordination point for GTP. At Ser-252 the chain carries Phosphoserine. The disordered stretch occupies residues 288-347 (LGEAASSEEDESEYEDCQEEEEDWQTCLEDSSSSDEEACGQDCKEGHTVDSEAQGRNTPQ). A compositionally biased stretch (acidic residues) spans 293-311 (SSEEDESEYEDCQEEEEDW). GTP-binding positions include 387–394 (GYPNVGKS) and 431–434 (DCPG). The disordered stretch occupies residues 625–652 (RGAGKPWKKHGNRNKKEKSRRLYKHLDM). Residues 630–652 (PWKKHGNRNKKEKSRRLYKHLDM) show a composition bias toward basic residues.

Belongs to the TRAFAC class YlqF/YawG GTPase family. LSG1 subfamily.

It localises to the cytoplasm. The protein resides in the endoplasmic reticulum. The protein localises to the nucleus. It is found in the cajal body. It catalyses the reaction GTP + H2O = GDP + phosphate + H(+). Functionally, functions as a GTPase. May act by mediating the release of NMD3 from the 60S ribosomal subunit after export into the cytoplasm during the 60S ribosomal subunit maturation. The protein is Large subunit GTPase 1 homolog of Bos taurus (Bovine).